The primary structure comprises 215 residues: MLQVYLVRHGETEWNVARRIQGQSDSPLTAMGVRQAQQVAERVKSAGITHIISSDLGRTCQTAEIIAQACRCDVITDPRLRELDMGVLEQREIATLNTQEEAWRKSLIDGTPDGRIPQGESMVELANRMQAALNSCLALPEHSRPLLVSHGIALGCLLSTVLGLPAYAERRLRLRNCSISRVDYQNSPWLANGWVIETAGDVSHLTDIALDEVQR.

Residues Arg-8–Asn-15, Gln-21–Gly-22, Arg-58, Glu-82–Met-85, and Gly-151–Ile-152 contribute to the substrate site. The Tele-phosphohistidine intermediate role is filled by His-9. Catalysis depends on Glu-82, which acts as the Proton donor/acceptor.

Belongs to the phosphoglycerate mutase family. GpmB subfamily.

It carries out the reaction (2R)-2-phosphoglycerate = (2R)-3-phosphoglycerate. It participates in carbohydrate degradation; glycolysis; pyruvate from D-glyceraldehyde 3-phosphate: step 3/5. The protein is Probable phosphoglycerate mutase GpmB of Proteus mirabilis (strain HI4320).